The primary structure comprises 163 residues: Troponin C, skeletal muscle (163 aa).

A Blocked amino end (Ala) modification is found at alanine 2. EF-hand domains follow at residues 18–53 (EMIAEFKAAFDMFDADGGGDISTKELGTVMRMLGQN), 54–89 (PTKEELDAIIEEVDEDGSGTIDFEEFLVMMVRQMKE), 94–129 (KSEEELANCFRIFDKNADGFIDIEELGEILRATGEH), and 130–163 (VTEEDIEDLMKDSDKNNDGRIDFDEFLKMMEGVQ). 18 residues coordinate Ca(2+): aspartate 31, aspartate 33, aspartate 37, glutamate 42, aspartate 67, aspartate 69, serine 71, threonine 73, glutamate 78, aspartate 107, asparagine 109, aspartate 111, glutamate 118, aspartate 143, asparagine 145, aspartate 147, arginine 149, and glutamate 154.

This sequence belongs to the troponin C family.

Its function is as follows. Troponin is the central regulatory protein of striated muscle contraction. Tn consists of three components: Tn-I which is the inhibitor of actomyosin ATPase, Tn-T which contains the binding site for tropomyosin and Tn-C. The binding of calcium to Tn-C abolishes the inhibitory action of Tn on actin filaments. This chain is Troponin C, skeletal muscle (TNNC2), found in Gallus gallus (Chicken).